Reading from the N-terminus, the 679-residue chain is Mitotic interactor and substrate of PLK1 (679 aa).

Serine 78 carries the post-translational modification Phosphoserine; by CDK1; in vitro. Disordered stretches follow at residues 151 to 182 and 206 to 245; these read AVRK…TPLE and ANKG…GHVV. Polar residues predominate over residues 153 to 163; sequence RKSSTVATLQG. Serine 156 carries the phosphoserine modification. Phosphothreonine; by CDK1; in vitro is present on residues threonine 164 and threonine 172. Threonine 179 bears the Phosphothreonine mark. Serine 214 carries the phosphoserine; by CDK1; in vitro modification. Residue threonine 219 is modified to Phosphothreonine. Threonine 224 bears the Phosphothreonine; by CDK1; in vitro mark. At serine 284 the chain carries Phosphoserine; by CDK1; in vitro. Phosphothreonine; by CDK1; in vitro is present on threonine 287. Residue serine 348 is modified to Phosphoserine. Over residues 360–371 the composition is skewed to basic and acidic residues; it reads QREEDHRREGLH. The interval 360 to 419 is disordered; sequence QREEDHRREGLHVGRASTPDWVSEGPQPGLRRALSSDSILSPAPDARAADPAPEVRKVNR. Threonine 377 bears the Phosphothreonine; by CDK1; in vitro mark. Serine 382 is subject to Phosphoserine; by CDK1; in vitro. Residues serine 394, serine 395, and serine 397 each carry the phosphoserine; by PLK1; in vitro modification. Serine 400 carries the post-translational modification Phosphoserine. The segment covering 401–411 has biased composition (low complexity); it reads PAPDARAADPA. A Phosphoserine modification is found at serine 430. Residues 447–494 are disordered; it reads PSSLSTAEAKAATSPKATMSPRHLSESSGKPLSTKQEASKPPRGCPQA. Serine 471 is subject to Phosphoserine; by PLK1; in vitro. Over residues 472-482 the composition is skewed to polar residues; it reads ESSGKPLSTKQ. Residues serine 541 and serine 543 each carry the phosphoserine modification. Residues 545–569 are a coiled coil; it reads DLLERERESVLRREQEVAEERRNAL. The segment covering 557 to 567 has biased composition (basic and acidic residues); the sequence is REQEVAEERRN. 2 disordered regions span residues 557–598 and 622–643; these read REQE…ITGS and DPVD…GINP. Serine 575 bears the Phosphoserine; by CDK1; in vitro mark. Threonine 577 is modified (phosphothreonine). Residues serine 582 and serine 586 each carry the phosphoserine; by PLK1; in vitro modification. The segment covering 583 to 593 has biased composition (low complexity); the sequence is DQNSRSSSQAS. Phosphoserine is present on serine 675.

The protein belongs to the MISP family. As to quaternary structure, associates with F-actin. Interacts with DCTN1; this interaction regulates DCTN1 distribution at the cell cortex. Interacts with PTK2/FAK and MAPRE1. In terms of processing, phosphorylated by CDK1 and PLK1. CDK1 is the priming kinase for PLK1 phosphorylation. Phosphorylation by PLK1 is required for proper spindle orientation at metaphase.

The protein resides in the cell junction. The protein localises to the focal adhesion. Its subcellular location is the cytoplasm. It is found in the cytoskeleton. It localises to the cell cortex. Its function is as follows. Plays a role in mitotic spindle orientation and mitotic progression. Regulates the distribution of dynactin at the cell cortex in a PLK1-dependent manner, thus stabilizing cortical and astral microtubule attachments required for proper mitotic spindle positioning. May link microtubules to the actin cytospkeleton and focal adhesions. May be required for directed cell migration and centrosome orientation. May also be necessary for proper stacking of the Golgi apparatus. This Homo sapiens (Human) protein is Mitotic interactor and substrate of PLK1.